We begin with the raw amino-acid sequence, 208 residues long: Urease accessory protein UreG (208 aa).

12-19 (GPVGAGKT) is a binding site for GTP.

It belongs to the SIMIBI class G3E GTPase family. UreG subfamily. In terms of assembly, homodimer. UreD, UreF and UreG form a complex that acts as a GTP-hydrolysis-dependent molecular chaperone, activating the urease apoprotein by helping to assemble the nickel containing metallocenter of UreC. The UreE protein probably delivers the nickel.

It localises to the cytoplasm. Facilitates the functional incorporation of the urease nickel metallocenter. This process requires GTP hydrolysis, probably effectuated by UreG. The chain is Urease accessory protein UreG from Rhodobacter capsulatus (Rhodopseudomonas capsulata).